A 459-amino-acid polypeptide reads, in one-letter code: Phosphomethylpyrimidine synthase (459 aa).

Residues Asn-80, Met-109, Tyr-139, His-175, 195 to 197, 236 to 239, and Glu-275 contribute to the substrate site; these read SRG and DSLR. His-279 contributes to the Zn(2+) binding site. Residue Tyr-302 participates in substrate binding. His-343 provides a ligand contact to Zn(2+). 3 residues coordinate [4Fe-4S] cluster: Cys-423, Cys-426, and Cys-431.

Belongs to the ThiC family. [4Fe-4S] cluster serves as cofactor.

It catalyses the reaction 5-amino-1-(5-phospho-beta-D-ribosyl)imidazole + S-adenosyl-L-methionine = 4-amino-2-methyl-5-(phosphooxymethyl)pyrimidine + CO + 5'-deoxyadenosine + formate + L-methionine + 3 H(+). It functions in the pathway cofactor biosynthesis; thiamine diphosphate biosynthesis. Catalyzes the synthesis of the hydroxymethylpyrimidine phosphate (HMP-P) moiety of thiamine from aminoimidazole ribotide (AIR) in a radical S-adenosyl-L-methionine (SAM)-dependent reaction. The polypeptide is Phosphomethylpyrimidine synthase (Synechocystis sp. (strain ATCC 27184 / PCC 6803 / Kazusa)).